A 166-amino-acid chain; its full sequence is Protein-export protein SecB (166 aa).

This sequence belongs to the SecB family. In terms of assembly, homotetramer, a dimer of dimers. One homotetramer interacts with 1 SecA dimer.

Its subcellular location is the cytoplasm. One of the proteins required for the normal export of preproteins out of the cell cytoplasm. It is a molecular chaperone that binds to a subset of precursor proteins, maintaining them in a translocation-competent state. It also specifically binds to its receptor SecA. This chain is Protein-export protein SecB, found in Roseobacter denitrificans (strain ATCC 33942 / OCh 114) (Erythrobacter sp. (strain OCh 114)).